Here is a 512-residue protein sequence, read N- to C-terminus: Pantetheinase (512 aa).

An N-terminal signal peptide occupies residues 1 to 23 (MGMSWWLACAAAFSALCVLKASS). One can recognise a CN hydrolase domain in the interval 32 to 308 (YEHAVILPKD…GKLLFAQLKS (277 aa)). Glu-81 functions as the Proton acceptor in the catalytic mechanism. 2 N-linked (GlcNAc...) asparagine glycosylation sites follow: Asn-132 and Asn-148. Lys-180 serves as the catalytic Proton donor. Catalysis depends on Cys-213, which acts as the Nucleophile. Residues Asn-316 and Asn-354 are each glycosylated (N-linked (GlcNAc...) asparagine). Asn-488 is lipidated: GPI-anchor amidated asparagine. A propeptide spans 489 to 512 (ASSDFIAHSLIIMLIVTPIIHYLC) (removed in mature form).

This sequence belongs to the carbon-nitrogen hydrolase superfamily. BTD/VNN family. In terms of assembly, monomer. N-glycosylated. As to expression, detected in kidney (at protein level). Ubiquitous.

It localises to the cell membrane. The catalysed reaction is (R)-pantetheine + H2O = cysteamine + (R)-pantothenate. Functionally, amidohydrolase that hydrolyzes specifically one of the carboamide linkages in D-pantetheine thus recycling pantothenic acid (vitamin B5) and releasing cysteamine. The sequence is that of Pantetheinase (Vnn1) from Mus musculus (Mouse).